Here is a 743-residue protein sequence, read N- to C-terminus: 1,4-alpha-glucan branching enzyme GlgB (743 aa).

D423 serves as the catalytic Nucleophile. Residue E476 is the Proton donor of the active site.

It belongs to the glycosyl hydrolase 13 family. GlgB subfamily. In terms of assembly, monomer.

It catalyses the reaction Transfers a segment of a (1-&gt;4)-alpha-D-glucan chain to a primary hydroxy group in a similar glucan chain.. The protein operates within glycan biosynthesis; glycogen biosynthesis. In terms of biological role, catalyzes the formation of the alpha-1,6-glucosidic linkages in glycogen by scission of a 1,4-alpha-linked oligosaccharide from growing alpha-1,4-glucan chains and the subsequent attachment of the oligosaccharide to the alpha-1,6 position. The protein is 1,4-alpha-glucan branching enzyme GlgB of Pseudomonas fluorescens (strain Pf0-1).